We begin with the raw amino-acid sequence, 187 residues long: MQTGSFDISELKRRMQGATHALQHELGGLRTGRASSSMLEPVQVDAYGTHMPLIQVATISVPEPRLLSVQVWDKSMIKAVEKAIVDSNLGLSPSTEGQVIRLRIPELNEERRKELVKVAHKYAEAARVAVRHVRRDGLDTLKKLEKNHEISEDDQERLAHDVQKVTDATIQEVDQLLAAKEKEILTV.

It belongs to the RRF family.

Its subcellular location is the cytoplasm. In terms of biological role, responsible for the release of ribosomes from messenger RNA at the termination of protein biosynthesis. May increase the efficiency of translation by recycling ribosomes from one round of translation to another. The polypeptide is Ribosome-recycling factor (Rhodopseudomonas palustris (strain BisA53)).